Here is a 474-residue protein sequence, read N- to C-terminus: Aspartyl/glutamyl-tRNA(Asn/Gln) amidotransferase subunit B (474 aa).

The protein belongs to the GatB/GatE family. GatB subfamily. In terms of assembly, heterotrimer of A, B and C subunits.

The enzyme catalyses L-glutamyl-tRNA(Gln) + L-glutamine + ATP + H2O = L-glutaminyl-tRNA(Gln) + L-glutamate + ADP + phosphate + H(+). It catalyses the reaction L-aspartyl-tRNA(Asn) + L-glutamine + ATP + H2O = L-asparaginyl-tRNA(Asn) + L-glutamate + ADP + phosphate + 2 H(+). Functionally, allows the formation of correctly charged Asn-tRNA(Asn) or Gln-tRNA(Gln) through the transamidation of misacylated Asp-tRNA(Asn) or Glu-tRNA(Gln) in organisms which lack either or both of asparaginyl-tRNA or glutaminyl-tRNA synthetases. The reaction takes place in the presence of glutamine and ATP through an activated phospho-Asp-tRNA(Asn) or phospho-Glu-tRNA(Gln). In Limosilactobacillus reuteri (strain DSM 20016) (Lactobacillus reuteri), this protein is Aspartyl/glutamyl-tRNA(Asn/Gln) amidotransferase subunit B.